The chain runs to 441 residues: Ribulose bisphosphate carboxylase large chain (441 aa).

Residues Asn-89 and Thr-139 each coordinate substrate. Residue Lys-141 is the Proton acceptor of the active site. Substrate is bound at residue Lys-143. Positions 167, 169, and 170 each coordinate Mg(2+). Lys-167 is modified (N6-carboxylysine). His-260 (proton acceptor) is an active-site residue. Residues Arg-261, His-293, and Ser-345 each coordinate substrate.

Belongs to the RuBisCO large chain family. Type I subfamily. Heterohexadecamer of 8 large chains and 8 small chains; disulfide-linked. The disulfide link is formed within the large subunit homodimers. Mg(2+) is required as a cofactor. Post-translationally, the disulfide bond which can form in the large chain dimeric partners within the hexadecamer appears to be associated with oxidative stress and protein turnover.

The protein localises to the plastid. The protein resides in the chloroplast. The catalysed reaction is 2 (2R)-3-phosphoglycerate + 2 H(+) = D-ribulose 1,5-bisphosphate + CO2 + H2O. It catalyses the reaction D-ribulose 1,5-bisphosphate + O2 = 2-phosphoglycolate + (2R)-3-phosphoglycerate + 2 H(+). In terms of biological role, ruBisCO catalyzes two reactions: the carboxylation of D-ribulose 1,5-bisphosphate, the primary event in carbon dioxide fixation, as well as the oxidative fragmentation of the pentose substrate in the photorespiration process. Both reactions occur simultaneously and in competition at the same active site. The sequence is that of Ribulose bisphosphate carboxylase large chain from Polemonium reptans (Greek valerian).